A 610-amino-acid polypeptide reads, in one-letter code: Sulfite reductase [NADPH] flavoprotein alpha-component (610 aa).

The Flavodoxin-like domain maps to 68–206; the sequence is IIVISASQTG…EVDKWKEKVV (139 aa). Residues 74–79, 121–124, and 157–166 contribute to the FMN site; these read SQTGNA, STHG, and LGDRSYEYFA. One can recognise an FAD-binding FR-type domain in the interval 243 to 459; that stretch reads EFPLIAYLLN…VESNDNFRLP (217 aa). FAD is bound by residues Thr-331, Ser-365, 397 to 400, 415 to 417, Tyr-421, and 430 to 433; these read RFYS, TVS, and GGAS. NADP(+)-binding positions include 530–531, 536–540, and Asp-572; these read SR and KVYVQ. Tyr-610 is a binding site for FAD.

Belongs to the NADPH-dependent sulphite reductase flavoprotein subunit CysJ family. The protein in the N-terminal section; belongs to the flavodoxin family. This sequence in the C-terminal section; belongs to the flavoprotein pyridine nucleotide cytochrome reductase family. Alpha(8)-beta(8). The alpha component is a flavoprotein, the beta component is a hemoprotein. The cofactor is FAD. FMN serves as cofactor.

It catalyses the reaction hydrogen sulfide + 3 NADP(+) + 3 H2O = sulfite + 3 NADPH + 4 H(+). Its pathway is sulfur metabolism; hydrogen sulfide biosynthesis; hydrogen sulfide from sulfite (NADPH route): step 1/1. In terms of biological role, component of the sulfite reductase complex that catalyzes the 6-electron reduction of sulfite to sulfide. This is one of several activities required for the biosynthesis of L-cysteine from sulfate. The flavoprotein component catalyzes the electron flow from NADPH -&gt; FAD -&gt; FMN to the hemoprotein component. The chain is Sulfite reductase [NADPH] flavoprotein alpha-component from Blochmanniella floridana.